The sequence spans 88 residues: Small ribosomal subunit protein uS15 (88 aa).

Belongs to the universal ribosomal protein uS15 family. As to quaternary structure, part of the 30S ribosomal subunit. Forms a bridge to the 50S subunit in the 70S ribosome, contacting the 23S rRNA.

Functionally, one of the primary rRNA binding proteins, it binds directly to 16S rRNA where it helps nucleate assembly of the platform of the 30S subunit by binding and bridging several RNA helices of the 16S rRNA. Forms an intersubunit bridge (bridge B4) with the 23S rRNA of the 50S subunit in the ribosome. In Francisella tularensis subsp. tularensis (strain FSC 198), this protein is Small ribosomal subunit protein uS15.